We begin with the raw amino-acid sequence, 413 residues long: Calsequestrin-2 (413 aa).

A signal peptide spans 1 to 19 (MKRIYLLVVGLYLLSFSRA). The residue at position 282 (Tyr-282) is a Phosphotyrosine. The N-linked (GlcNAc...) asparagine glycan is linked to Asn-335. The tract at residues 365 to 413 (VLSGKINTEDDDNEDEDDDGDNDNDDDDDDDDNSDEDNDDSDDDDDDDE) is disordered. The span at 373-413 (EDDDNEDEDDDGDNDNDDDDDDDDNSDEDNDDSDDDDDDDE) shows a compositional bias: acidic residues. Ser-398 and Ser-405 each carry phosphoserine.

Belongs to the calsequestrin family. As to quaternary structure, monomer, homodimer and homooligomer. Mostly monomeric in the absence of calcium. Forms higher oligomers in a calcium-dependent manner. Dimers associate to form tetramers, that then form linear homomer chains. Interacts with ASPH and TRDN. Phosphorylation in the C-terminus, probably by CK2, moderately increases calcium buffering capacity. Post-translationally, N-glycosylated. As to expression, detected in stomach and vas deferens (at protein level).

It localises to the sarcoplasmic reticulum lumen. In terms of biological role, calsequestrin is a high-capacity, moderate affinity, calcium-binding protein and thus acts as an internal calcium store in muscle. Calcium ions are bound by clusters of acidic residues at the protein surface, especially at the interface between subunits. Can bind around 60 Ca(2+) ions. Regulates the release of lumenal Ca(2+) via the calcium release channel RYR2; this plays an important role in triggering muscle contraction. Plays a role in excitation-contraction coupling in the heart and in regulating the rate of heart beats. The polypeptide is Calsequestrin-2 (Casq2) (Rattus norvegicus (Rat)).